The sequence spans 475 residues: Ribulose bisphosphate carboxylase large chain (475 aa).

Positions 1–2 (MS) are excised as a propeptide. Pro3 is modified (N-acetylproline). Position 14 is an N6,N6,N6-trimethyllysine (Lys14). Asn123 and Thr173 together coordinate substrate. Lys175 functions as the Proton acceptor in the catalytic mechanism. Residue Lys177 participates in substrate binding. Mg(2+) is bound by residues Lys201, Asp203, and Glu204. The residue at position 201 (Lys201) is an N6-carboxylysine. The active-site Proton acceptor is His294. The substrate site is built by Arg295, His327, and Ser379.

This sequence belongs to the RuBisCO large chain family. Type I subfamily. As to quaternary structure, heterohexadecamer of 8 large chains and 8 small chains; disulfide-linked. The disulfide link is formed within the large subunit homodimers. Mg(2+) serves as cofactor. The disulfide bond which can form in the large chain dimeric partners within the hexadecamer appears to be associated with oxidative stress and protein turnover.

It is found in the plastid. Its subcellular location is the chloroplast. It carries out the reaction 2 (2R)-3-phosphoglycerate + 2 H(+) = D-ribulose 1,5-bisphosphate + CO2 + H2O. It catalyses the reaction D-ribulose 1,5-bisphosphate + O2 = 2-phosphoglycolate + (2R)-3-phosphoglycerate + 2 H(+). Its function is as follows. RuBisCO catalyzes two reactions: the carboxylation of D-ribulose 1,5-bisphosphate, the primary event in carbon dioxide fixation, as well as the oxidative fragmentation of the pentose substrate in the photorespiration process. Both reactions occur simultaneously and in competition at the same active site. The polypeptide is Ribulose bisphosphate carboxylase large chain (Tsuga heterophylla (Western hemlock)).